A 735-amino-acid chain; its full sequence is Capsid protein (735 aa).

Disordered regions lie at residues 577–604 (VVRN…DPKY) and 632–695 (QQAS…TVEQ). Residues 649 to 666 (EIKGLTEADQEAEKDSGL) show a composition bias toward basic and acidic residues. Low complexity predominate over residues 676–685 (SSQETQSEQE).

Belongs to the anelloviridae capsid protein family.

It is found in the virion. In terms of biological role, self assemble to form an icosahedral capsid. The chain is Capsid protein from Pan troglodytes (Chimpanzee).